The primary structure comprises 118 residues: Cell division protein FtsB (118 aa).

Topologically, residues 1–6 (MRNWRW) are cytoplasmic. Residues 7-24 (LLLVLAALLSWLQHRFWF) form a helical membrane-spanning segment. Residues 25 to 118 (GPGNSGEVRM…DLAQPRREKR (94 aa)) are Periplasmic-facing. Positions 30–66 (GEVRMLQVQIVQQHQENERLRQRNASLAAEVKNLKDG) form a coiled coil. The tract at residues 97 to 118 (PLPNDTSADHGVDLAQPRREKR) is disordered. The segment covering 103-118 (SADHGVDLAQPRREKR) has biased composition (basic and acidic residues).

This sequence belongs to the FtsB family. In terms of assembly, part of a complex composed of FtsB, FtsL and FtsQ.

It localises to the cell inner membrane. Functionally, essential cell division protein. May link together the upstream cell division proteins, which are predominantly cytoplasmic, with the downstream cell division proteins, which are predominantly periplasmic. In Xylella fastidiosa (strain 9a5c), this protein is Cell division protein FtsB.